We begin with the raw amino-acid sequence, 726 residues long: Transcription factor 12 (726 aa).

Disordered stretches follow at residues 27–75 (SPPV…SRGF), 89–223 (LVSH…TFFD), 243–267 (YGGMLGGSSSHMPQSGNYSNLHSHD), 289–309 (SSFHRSSASTSPFVTASHTPP), 345–367 (PDHTSSSFPSNPSTPVGSPSPLA), 380–409 (TASGPAGRAGTTQWTRATGQAPSSPSYENS), 501–532 (MGSVHREESGSLNNNNHSALQASAAPTSSSEL), 558–624 (VENQ…ERRM), and 694–726 (EEEKVSGVSGDPQQAHPAVHPGLTDTSNPMGHL). Positions 29-47 (PVNSGKNRPTTLGSSQFTA) are enriched in polar residues. A compositionally biased stretch (low complexity) spans 55 to 74 (SQASWASGGQSSPSFESSRG). Composition is skewed to polar residues over residues 145–157 (PGKSPTPFYSYTG), 249–263 (GSSSHMPQSGNYSNL), and 291–309 (FHRSSASTSPFVTASHTPP). Low complexity predominate over residues 348–359 (TSSSFPSNPSTP). 2 stretches are compositionally biased toward polar residues: residues 389–409 (GTTQWTRATGQAPSSPSYENS) and 510–532 (GSLNNNNHSALQASAAPTSSSEL). Residues 559–575 (ENQDKDDMHDSHASDDL) show a composition bias toward basic and acidic residues. A compositionally biased stretch (low complexity) spans 592 to 603 (SSRPSCELSCSS). Over residues 612-624 (PEQKAERERERRM) the composition is skewed to basic and acidic residues. The region spanning 621–674 (ERRMANNARERLRVRDINEAFKELGRMCQLHLKSEKPQTKLLILHQAVAVILSL) is the bHLH domain. The class A specific domain stretch occupies residues 676 to 699 (QQVRERNLNPKAACLKRREEEKVS). The segment covering 717–726 (TDTSNPMGHL) has biased composition (polar residues).

As to quaternary structure, efficient DNA binding requires dimerization with another bHLH protein.

The protein resides in the nucleus. Its function is as follows. Transcriptional regulator. Involved in the initiation of neuronal differentiation. Activates transcription by binding to the E box (5'-CANNTG-3'). May be involved in the functional network that regulates the development of the GnRH axis. This Danio rerio (Zebrafish) protein is Transcription factor 12 (tcf12).